A 691-amino-acid chain; its full sequence is Competence protein ComA (691 aa).

6 helical membrane passes run 183–203 (HLVS…AWLA), 220–240 (WVLA…GFSV), 280–300 (LAVL…LIWA), 322–342 (VLSL…SPLV), 347–367 (IPWF…VPFA), and 396–416 (VAAA…LLLL).

It to B.subtilis ComEC, H.influenzae REC2, and E.coli YcaI.

Its subcellular location is the cell inner membrane. Essential for natural transformation. Could be a transporter involved in DNA uptake. In Neisseria gonorrhoeae, this protein is Competence protein ComA (comA).